A 379-amino-acid polypeptide reads, in one-letter code: UDP-4-amino-4-deoxy-L-arabinose--oxoglutarate aminotransferase (379 aa).

Residue Lys182 is modified to N6-(pyridoxal phosphate)lysine.

It belongs to the DegT/DnrJ/EryC1 family. ArnB subfamily. In terms of assembly, homodimer. Requires pyridoxal 5'-phosphate as cofactor.

It carries out the reaction UDP-4-amino-4-deoxy-beta-L-arabinose + 2-oxoglutarate = UDP-beta-L-threo-pentopyranos-4-ulose + L-glutamate. It participates in nucleotide-sugar biosynthesis; UDP-4-deoxy-4-formamido-beta-L-arabinose biosynthesis; UDP-4-deoxy-4-formamido-beta-L-arabinose from UDP-alpha-D-glucuronate: step 2/3. The protein operates within bacterial outer membrane biogenesis; lipopolysaccharide biosynthesis. Its function is as follows. Catalyzes the conversion of UDP-4-keto-arabinose (UDP-Ara4O) to UDP-4-amino-4-deoxy-L-arabinose (UDP-L-Ara4N). The modified arabinose is attached to lipid A and is required for resistance to polymyxin and cationic antimicrobial peptides. The sequence is that of UDP-4-amino-4-deoxy-L-arabinose--oxoglutarate aminotransferase from Escherichia coli O8 (strain IAI1).